The chain runs to 158 residues: Glycine/sarcosine/betaine reductase complex component A (158 aa).

Sec44 is a catalytic residue. A non-standard amino acid (selenocysteine) is located at residue Sec44.

The protein belongs to the GrdA family. In terms of assembly, monomer. Component of the glycine, sarcosine and betaine reductase complexes, together with components B and C.

It catalyses the reaction acetyl phosphate + [thioredoxin]-disulfide + NH4(+) + H2O = [thioredoxin]-dithiol + glycine + phosphate + H(+). The catalysed reaction is acetyl phosphate + methylamine + [thioredoxin]-disulfide + H2O = sarcosine + [thioredoxin]-dithiol + phosphate + H(+). It carries out the reaction acetyl phosphate + trimethylamine + [thioredoxin]-disulfide + H2O = glycine betaine + [thioredoxin]-dithiol + phosphate + H(+). Its function is as follows. In the first step of glycine, betaine and sarcosine reductases, the substrate is bound to component PB via a Schiff base intermediate. Then the PB-activated substrate is nucleophilically attacked by the selenol anion of component PA to transform it to a carboxymethylated selenoether and the respective amine. By action of component PC, acetyl phosphate is formed, leaving component PA in its oxidized state. Finally component PA becomes reduced by the thioredoxin system to start a new catalytic cycle of reductive deamination. This Alkaliphilus metalliredigens (strain QYMF) protein is Glycine/sarcosine/betaine reductase complex component A.